Reading from the N-terminus, the 618-residue chain is Proline--tRNA ligase (618 aa).

The protein belongs to the class-II aminoacyl-tRNA synthetase family. ProS type 1 subfamily. In terms of assembly, homodimer.

The protein resides in the cytoplasm. It carries out the reaction tRNA(Pro) + L-proline + ATP = L-prolyl-tRNA(Pro) + AMP + diphosphate. Its function is as follows. Catalyzes the attachment of proline to tRNA(Pro) in a two-step reaction: proline is first activated by ATP to form Pro-AMP and then transferred to the acceptor end of tRNA(Pro). As ProRS can inadvertently accommodate and process non-cognate amino acids such as alanine and cysteine, to avoid such errors it has two additional distinct editing activities against alanine. One activity is designated as 'pretransfer' editing and involves the tRNA(Pro)-independent hydrolysis of activated Ala-AMP. The other activity is designated 'posttransfer' editing and involves deacylation of mischarged Ala-tRNA(Pro). The misacylated Cys-tRNA(Pro) is not edited by ProRS. The protein is Proline--tRNA ligase of Streptococcus equi subsp. zooepidemicus (strain H70).